A 140-amino-acid chain; its full sequence is MMRISMSLPKKLLNEFDEVLRDRGYQSRSKGIRDALKDYIVRYQWMNEMEGERIGIIAVIYDHHYTGVMEDLADIQHDYREYINAVMHVHMTERHCLEVIVVKGDVAKIRELTEKMMRLKGVEHVRLTSTSTEQKIEHEH.

The Ni(2+) site is built by His77, His88, His90, and Cys96.

The protein belongs to the transcriptional regulatory CopG/NikR family. Ni(2+) serves as cofactor.

Its function is as follows. Transcriptional regulator. The protein is Putative nickel-responsive regulator 2 of Methanothermobacter thermautotrophicus (strain ATCC 29096 / DSM 1053 / JCM 10044 / NBRC 100330 / Delta H) (Methanobacterium thermoautotrophicum).